Consider the following 906-residue polypeptide: Cadherin-2 (906 aa).

The N-terminal stretch at methionine 1 to alanine 25 is a signal peptide. Residues serine 26–arginine 159 constitute a propeptide that is removed on maturation. Cadherin domains follow at residues aspartate 160 to phenylalanine 267, leucine 268 to phenylalanine 382, threonine 383 to phenylalanine 497, alanine 498 to proline 603, and glutamine 604 to glycine 717. Residues aspartate 160 to alanine 724 are Extracellular-facing. Residue glutamate 170 coordinates Ca(2+). Asparagine 190 carries N-linked (GlcNAc...) asparagine glycosylation. Residues aspartate 226, glutamate 228, aspartate 259, methionine 260, asparagine 261, aspartate 262, and asparagine 263 each coordinate Ca(2+). Residue asparagine 273 is glycosylated (N-linked (GlcNAc...) asparagine). Residues aspartate 293, aspartate 295, and asparagine 301 each coordinate Ca(2+). Residue asparagine 325 is glycosylated (N-linked (GlcNAc...) asparagine). Aspartate 353 lines the Ca(2+) pocket. Asparagine 402, asparagine 572, asparagine 651, and asparagine 692 each carry an N-linked (GlcNAc...) asparagine glycan. A helical membrane pass occupies residues isoleucine 725–tryptophan 745. Residues methionine 746–aspartate 906 lie on the Cytoplasmic side of the membrane. The segment covering serine 863–glycine 880 has biased composition (low complexity). The interval serine 863–aspartate 883 is disordered.

In terms of assembly, homodimer (via extracellular region). Can also form heterodimers with other cadherins (via extracellular region). Dimerization occurs in trans, i.e. with a cadherin chain from another cell. Interacts with CDCP1. Interacts with PCDH8; this complex may also include TAOK2. The interaction with PCDH8 may lead to internalization through TAOK2/p38 MAPK pathway. Identified in a complex containing FGFR4, NCAM1, CDH2, PLCG1, FRS2, SRC, SHC1, GAP43 and CTTN. May interact with OBSCN (via protein kinase domain 2). Interacts with FBXO45. Post-translationally, cleaved by MMP24. Ectodomain cleavage leads to the generation of a soluble 90 kDa N-terminal soluble fragment and a 45 kDa membrane-bound C-terminal fragment 1 (CTF1), which is further cleaved by gamma-secretase into a 35 kDa. Cleavage in neural stem cells by MMP24 affects CDH2-mediated anchorage of neural stem cells to ependymocytes in the adult subependymal zone, leading to modulate neural stem cell quiescence. In terms of processing, may be phosphorylated by OBSCN. O-glycosylated on Ser and Thr residues. As to expression, expressed in cardiac muscle (at protein level).

The protein resides in the cell membrane. It is found in the sarcolemma. Its subcellular location is the cell junction. It localises to the adherens junction. The protein localises to the desmosome. The protein resides in the cell surface. Calcium-dependent cell adhesion protein; preferentially mediates homotypic cell-cell adhesion by dimerization with a CDH2 chain from another cell. Cadherins may thus contribute to the sorting of heterogeneous cell types. Acts as a regulator of neural stem cells quiescence by mediating anchorage of neural stem cells to ependymocytes in the adult subependymal zone: upon cleavage by MMP24, CDH2-mediated anchorage is affected, leading to modulate neural stem cell quiescence. Plays a role in cell-to-cell junction formation between pancreatic beta cells and neural crest stem (NCS) cells, promoting the formation of processes by NCS cells. Required for proper neurite branching. Required for pre- and postsynaptic organization. CDH2 may be involved in neuronal recognition mechanism. In hippocampal neurons, may regulate dendritic spine density. This Mus musculus (Mouse) protein is Cadherin-2 (Cdh2).